The primary structure comprises 297 residues: MDASMVPRVPHKVGVVGYGRLGQSLVSRLLAQGSELGLELVFVWNRDPGRMAGSVPPALQLEDLTTLEERHPDLVVEVAHPKIIHESGVQILRHANLLVGSPSALADQTTERQLLEASNHWGHTVFVARGALWGCEDISRLDAAGGLQSLRVTMATHPDGFRLEGPLAAAHSSGPRTVLYEGPVRGLCPLAPRNSNTMAAAALAAPSLGFDRVIGVLVADLSLTDMHVVDVELTGPQGPQAAALPCTPTERTQPSLALSLAPLLLQPSGTAYWAAVSFPPDLGSASAEFPPLPLLSP.

Phosphoserine occurs at positions 24 and 172.

This sequence belongs to the L-aspartate dehydrogenase family.

The chain is Aspartate dehydrogenase domain-containing protein from Rattus norvegicus (Rat).